A 1328-amino-acid chain; its full sequence is MKNKKKIKNKISYSLLERELMGSRENEIAPEDCASFLSRITYSWTQKMLIYGYFNTLQLKDVPDLPESIKVENTTPILDEFKFKKNEKFGLVWFIYKRFVMVRHKTSIIVQIFSAIVSVLSPLCLRAFILYVQREPSEKSFLVGLFYAVLVLMGALFLSISLQHTYWYTMKCGLEVKGALTSKIYSKTLKLSNYGKRLYSSGTILNLISSDCQNFADYFWIDYLILLVAPIQIIALLALLCWTIGYSGLVGFLIMILSLPLSTFLSSKVSKYQLLSLKYSDKRCNLISEMINGIYLLKLYNWELFFINRIEKQRKQQLINLYKRMAFWALDKMVVQISSALVLVSSFTVYTLIANKSITYEVAFTSISIFSNLREPCELLPQAIQRLLSLLPSSDRICKFLYETSEIIENLSTITTTNGTNQDILITNGTFDWNDNNKNINVGVDSQENKNDDDDMIELVNNDSIETTTSYVLDDINFIAPAGKLTIICGVVGSGKSSLINGLIGEIYKVSGQVTIPNTVSFTNQQPFLVNSTLRENILFGLPMDMDRYKKVLESCSLLTDLQSMPGKDLTEIGERGINLSGGQKQRINLARALYSNSDCYILDEPLSAVDPQVATHLFNHCIQGELMNNKTRILVTHQLQFIPSADHIVVLENGILTQGTYQELKDKFDFESIMKTKKLNLELNNSNNNNNNNNNKEEEEDVENLEKEQQQQVINVNDVISNEFESKNDELNSKLLVNEERETGSVELNIYKMYIKYGSSFIFFFTMIMMYIISQLLFLLFDYWLTIWSDEKKNKNGTKGDSFYILYYLLLVGLFSVFLGIRYFMILHFTNSSSKNLHDKLLKSIGYASCQFFDINSSGRINNRFTKDIAEVDLILMVLSDALYCGSTVLVAVLMMIVINPLIVFPFLLLALFYYLVQKLYRSSSLELKRLENISRSPIFSILSESFNGLITIRSFRQQSRFIKRMQDSINVNLRLFYYNFSAHRWIGIKIEIISSAAVFLSAFFSLFNSNTGLSVLAVTTSLSLTGYLNWCIRQYIEFSMKMSSVERIENYINQPREGDTMNVDMELESNLPINWPQKGEIQFKNVEIKYRPNLKPSLKNISFDIKSNEKIGIVGKSGSGKSTTMLALFRMIECSKGSIHIDGIDISKISLSKLRNSIGICPQEPFIFSGTIRKNIDPFGIYSDSEIWLALEKVKLKETISLLPMKIDTIIHEQANLSFGQKQLLCLTRVLLKSPKLVFFDEHSSSIDYFTAHQLNISVKENITNSTTLTIAHRIDTIIDSDRILVIDSGELIEIFDKNNINNNINNQNSKFKKFVQHTSDHFKNY.

The region spanning 104-389 (HKTSIIVQIF…LPQAIQRLLS (286 aa)) is the ABC transmembrane type-1 1 domain. 6 helical membrane passes run 112–132 (IFSAIVSVLSPLCLRAFILYV), 140–160 (SFLVGLFYAVLVLMGALFLSI), 224–244 (LILLVAPIQIIALLALLCWTI), 245–265 (GYSGLVGFLIMILSLPLSTFL), 287–307 (ISEMINGIYLLKLYNWELFFI), and 333–353 (MVVQISSALVLVSSFTVYTLI). The ABC transporter 1 domain maps to 457–678 (IELVNNDSIE…FDFESIMKTK (222 aa)). Position 490–497 (490–497 (GVVGSGKS)) interacts with ATP. Residues 684 to 695 (LNNSNNNNNNNN) show a composition bias toward low complexity. The interval 684 to 708 (LNNSNNNNNNNNNKEEEEDVENLEK) is disordered. A run of 5 helical transmembrane segments spans residues 762-782 (FIFFFTMIMMYIISQLLFLLF), 802-822 (DSFYILYYLLLVGLFSVFLGI), 894-914 (VLMMIVINPLIVFPFLLLALF), 988-1008 (IGIKIEIISSAAVFLSAFFSL), and 1014-1034 (GLSVLAVTTSLSLTGYLNWCI). Positions 765–1046 (FFTMIMMYII…YIEFSMKMSS (282 aa)) constitute an ABC transmembrane type-1 2 domain. The ABC transporter 2 domain occupies 1083–1316 (IQFKNVEIKY…INNQNSKFKK (234 aa)). ATP is bound at residue 1117–1124 (GKSGSGKS).

Belongs to the ABC transporter superfamily. ABCC family. Conjugate transporter (TC 3.A.1.208) subfamily.

The protein localises to the membrane. The protein is ABC transporter C family member 7 (abcC7) of Dictyostelium discoideum (Social amoeba).